The chain runs to 313 residues: 4-hydroxy-3-methylbut-2-enyl diphosphate reductase (313 aa).

Position 20 (Cys-20) interacts with [4Fe-4S] cluster. (2E)-4-hydroxy-3-methylbut-2-enyl diphosphate contacts are provided by His-49 and His-82. Dimethylallyl diphosphate is bound by residues His-49 and His-82. Isopentenyl diphosphate-binding residues include His-49 and His-82. Cys-104 provides a ligand contact to [4Fe-4S] cluster. His-132 is a binding site for (2E)-4-hydroxy-3-methylbut-2-enyl diphosphate. Residue His-132 participates in dimethylallyl diphosphate binding. His-132 contributes to the isopentenyl diphosphate binding site. The active-site Proton donor is the Glu-134. (2E)-4-hydroxy-3-methylbut-2-enyl diphosphate is bound at residue Thr-172. Residue Cys-201 coordinates [4Fe-4S] cluster. Positions 229, 230, 231, and 273 each coordinate (2E)-4-hydroxy-3-methylbut-2-enyl diphosphate. Residues Ser-229, Ser-230, Asn-231, and Ser-273 each contribute to the dimethylallyl diphosphate site. Residues Ser-229, Ser-230, Asn-231, and Ser-273 each contribute to the isopentenyl diphosphate site.

This sequence belongs to the IspH family. It depends on [4Fe-4S] cluster as a cofactor.

It catalyses the reaction isopentenyl diphosphate + 2 oxidized [2Fe-2S]-[ferredoxin] + H2O = (2E)-4-hydroxy-3-methylbut-2-enyl diphosphate + 2 reduced [2Fe-2S]-[ferredoxin] + 2 H(+). It carries out the reaction dimethylallyl diphosphate + 2 oxidized [2Fe-2S]-[ferredoxin] + H2O = (2E)-4-hydroxy-3-methylbut-2-enyl diphosphate + 2 reduced [2Fe-2S]-[ferredoxin] + 2 H(+). Its pathway is isoprenoid biosynthesis; dimethylallyl diphosphate biosynthesis; dimethylallyl diphosphate from (2E)-4-hydroxy-3-methylbutenyl diphosphate: step 1/1. The protein operates within isoprenoid biosynthesis; isopentenyl diphosphate biosynthesis via DXP pathway; isopentenyl diphosphate from 1-deoxy-D-xylulose 5-phosphate: step 6/6. Functionally, catalyzes the conversion of 1-hydroxy-2-methyl-2-(E)-butenyl 4-diphosphate (HMBPP) into a mixture of isopentenyl diphosphate (IPP) and dimethylallyl diphosphate (DMAPP). Acts in the terminal step of the DOXP/MEP pathway for isoprenoid precursor biosynthesis. The polypeptide is 4-hydroxy-3-methylbut-2-enyl diphosphate reductase (Desulfotalea psychrophila (strain LSv54 / DSM 12343)).